A 234-amino-acid polypeptide reads, in one-letter code: Transcription factor UDT1 (234 aa).

A disordered region spans residues 1-51 (MPRRARARGGGGGGGEEVKVEDDFIDSVLNFGGGGGGEEDGDDGEEEQQQQ). A compositionally biased stretch (acidic residues) spans 37-48 (GEEDGDDGEEEQ). The basic motif; degenerate stretch occupies residues 61–74 (EFKSKNLEAERRRR). Positions 61 to 110 (EFKSKNLEAERRRRGRLNGNIFALRAVVPKITKMSKEATLSDAIEHIKNL) constitute a bHLH domain. Residues 75-110 (GRLNGNIFALRAVVPKITKMSKEATLSDAIEHIKNL) form a helix-loop-helix motif region.

The protein belongs to the bHLH protein family.

Its subcellular location is the nucleus. Its function is as follows. Transcription factor that plays a crucial role in tapetum development. Required for male fertility and pollen differentiation within the developing anther. Plays a major role in maintaining tapetum development, starting in early meiosis. Required for pollen mother cell meiosis. May regulate the anther-specific cysteine protease CP1 and lipid-transfer proteins C4 and C6. Required for anther development. Functions in parallel with GAMYB to regulate early anther development. Functions upstream of the transcription factor TDR and may positively regulate its transcription. In Oryza sativa subsp. japonica (Rice), this protein is Transcription factor UDT1.